Reading from the N-terminus, the 298-residue chain is Homoserine kinase (298 aa).

79-89 (PIARGLGSSGA) is an ATP binding site.

This sequence belongs to the GHMP kinase family. Homoserine kinase subfamily.

The protein resides in the cytoplasm. It catalyses the reaction L-homoserine + ATP = O-phospho-L-homoserine + ADP + H(+). It functions in the pathway amino-acid biosynthesis; L-threonine biosynthesis; L-threonine from L-aspartate: step 4/5. In terms of biological role, catalyzes the ATP-dependent phosphorylation of L-homoserine to L-homoserine phosphate. This chain is Homoserine kinase, found in Pyrobaculum islandicum (strain DSM 4184 / JCM 9189 / GEO3).